Here is a 352-residue protein sequence, read N- to C-terminus: tRNA pseudouridine synthase D (352 aa).

D81 (nucleophile) is an active-site residue. The TRUD domain occupies 157 to 303; the sequence is GIPNYFGVQR…MEHERRILRL (147 aa).

The protein belongs to the pseudouridine synthase TruD family.

It carries out the reaction uridine(13) in tRNA = pseudouridine(13) in tRNA. Responsible for synthesis of pseudouridine from uracil-13 in transfer RNAs. The protein is tRNA pseudouridine synthase D of Pseudomonas syringae pv. tomato (strain ATCC BAA-871 / DC3000).